The chain runs to 388 residues: Mannitol-1-phosphate 5-dehydrogenase (388 aa).

Residue 5–16 (AIQFGGGNIGRG) participates in NAD(+) binding. K213 is an active-site residue.

The protein belongs to the mannitol dehydrogenase family. Monomer.

It carries out the reaction D-mannitol 1-phosphate + NAD(+) = beta-D-fructose 6-phosphate + NADH + H(+). In terms of biological role, catalyzes the NAD(H)-dependent interconversion of D-fructose 6-phosphate and D-mannitol 1-phosphate in the mannitol metabolic pathway. Has a strong preference for NADH over NADPH. Required for protection of conidiospores against exogenous stresses such as high temperatures and an oxidative environment. The chain is Mannitol-1-phosphate 5-dehydrogenase (mpdA) from Aspergillus niger.